The following is a 174-amino-acid chain: Peptide methionine sulfoxide reductase MsrA (174 aa).

Residue cysteine 10 is part of the active site.

The protein belongs to the MsrA Met sulfoxide reductase family.

The catalysed reaction is L-methionyl-[protein] + [thioredoxin]-disulfide + H2O = L-methionyl-(S)-S-oxide-[protein] + [thioredoxin]-dithiol. It catalyses the reaction [thioredoxin]-disulfide + L-methionine + H2O = L-methionine (S)-S-oxide + [thioredoxin]-dithiol. Functionally, has an important function as a repair enzyme for proteins that have been inactivated by oxidation. Catalyzes the reversible oxidation-reduction of methionine sulfoxide in proteins to methionine. This chain is Peptide methionine sulfoxide reductase MsrA, found in Arthrobacter sp. (strain FB24).